The following is a 569-amino-acid chain: MSADCSVGANPLAQLNKRVQQDRTLQHGSHVNIHQGAEAQAFKSGPQVSESNKFQMEQFMAGKASSGGNMFMGAGMSSGPLALGGSSGLRMSPGPAKELGARLGGAPMTGSWSQEFNQQVGSPVQSSSAVSSVSMSSASSSVARAGAYRPMNMMRPVMGLQGARAVGVERHAGPAINDAAWEQQFQELEKQVEKTLNISDPVEQQQVLEELSAEAREADYAGGDYEKRFQQIWNDIHDQTDDLDSRTELGGGSGDYQRVFSTRPAQTAQYAFETDNQYLHNTDAYKIGCILMENGAKLSEAALAFEAAVQQDPGHVDAWLRLGLVQTQNEKELSGINALEQCLKADPHNLMALMTVAISYINEGYDVSAFTMLGRWLETKYPAFVEEPLDRVDRYNLSRLIIEQYLRVANALPEVDPDVQLGLGILFYANEDFDKTIDCFRAALAVRPDDECMWNRLGASLANSNRSEEAIQAYHRAIQLKPTFVRARYNLAVSSMNIGCYREAAEHLLTALSMHEVEGVAMAPGSGNVPSSNILETLKRAFIAMDRRDLLERVVPNMDLQQFRGEFNF.

C5 is covalently cross-linked (Glycyl cysteine thioester (Cys-Gly) (interchain with G-Cter in ubiquitin)). The segment at 6 to 28 (SVGANPLAQLNKRVQQDRTLQHG) is amphipathic helix 1 (AH1). Residue K17 forms a Glycyl lysine isopeptide (Lys-Gly) (interchain with G-Cter in ubiquitin) linkage. An amphipathic helix 2 (AH2) region spans residues 53–71 (KFQMEQFMAGKASSGGNMF). A WxxxF/Y motif 1 motif is present at residues 112–116 (WSQEF). Positions 150 to 154 (PMNMM) are amphipathic helix 3 (AH3). A WxxxF/Y motif 2 motif is present at residues 181–185 (WEQQF). Positions 229–245 (FQQIWNDIHDQTDDLDS) are amphipathic helix 4 (AH4). TPR repeat units lie at residues 281-315 (NTDA…DPGH), 316-349 (VDAW…DPHN), 417-450 (PDVQ…RPDD), 452-484 (CMWN…KPTF), and 486-518 (RARY…HEVE).

Belongs to the peroxisomal targeting signal receptor family. As to quaternary structure, interacts (via WxxxF/Y and LVxEF motifs) with PEX14; promoting translocation through the PEX13-PEX14 docking complex. In terms of processing, monoubiquitinated at Cys-5 by PEX2 during PEX5 passage through the retrotranslocation channel: monoubiquitination acts as a signal for PEX5 extraction and is required for proper export from peroxisomes and recycling. When PEX5 recycling is compromised, polyubiquitinated at Lys-17 by PEX10 during its passage through the retrotranslocation channel, leading to its degradation.

It localises to the cytoplasm. It is found in the cytosol. The protein resides in the peroxisome matrix. In terms of biological role, receptor that mediates peroxisomal import of proteins containing a C-terminal PTS1-type tripeptide peroxisomal targeting signal (SKL-type). Binds to cargo proteins containing a PTS1 peroxisomal targeting signal in the cytosol, and translocates them into the peroxisome matrix by passing through the PEX13-PEX14 docking complex along with cargo proteins. PEX5 receptor is then retrotranslocated into the cytosol, leading to release of bound cargo in the peroxisome matrix, and reset for a subsequent peroxisome import cycle. This is Peroxisomal targeting signal receptor (PEX5) from Eremothecium gossypii (strain ATCC 10895 / CBS 109.51 / FGSC 9923 / NRRL Y-1056) (Yeast).